Reading from the N-terminus, the 1855-residue chain is Chitin synthase 5 (1855 aa).

Residues M1–D778 enclose the Myosin motor domain. An ATP-binding site is contributed by G95–T102. Residues N221, N520, and N558 are each glycosylated (N-linked (GlcNAc...) asparagine). The disordered stretch occupies residues A585–A650. The segment at L658–D682 is actin-binding. N-linked (GlcNAc...) asparagine glycosylation is present at N662. 2 helical membrane passes run W887–G907 and V922–F942. The Cytochrome b5 heme-binding domain occupies Q950–F1008. 2 N-linked (GlcNAc...) asparagine glycosylation sites follow: N1037 and N1061. The helical transmembrane segment at I1199–L1219 threads the bilayer. N1422, N1456, and N1562 each carry an N-linked (GlcNAc...) asparagine glycan. The next 3 membrane-spanning stretches (helical) occupy residues F1587 to V1607, A1621 to V1641, and W1650 to F1670. Residues N1755 and N1767 are each glycosylated (N-linked (GlcNAc...) asparagine). The region spanning M1797–S1852 is the DEK-C domain.

In the N-terminal section; belongs to the TRAFAC class myosin-kinesin ATPase superfamily. Myosin family. The protein in the C-terminal section; belongs to the chitin synthase family. Class V subfamily.

It localises to the apical cell membrane. The protein localises to the cell septum. Its subcellular location is the cell tip. It carries out the reaction [(1-&gt;4)-N-acetyl-beta-D-glucosaminyl](n) + UDP-N-acetyl-alpha-D-glucosamine = [(1-&gt;4)-N-acetyl-beta-D-glucosaminyl](n+1) + UDP + H(+). Functionally, polymerizes chitin, a structural polymer of the cell wall and septum, by transferring the sugar moiety of UDP-GlcNAc to the non-reducing end of the growing chitin polymer. This chain is Chitin synthase 5, found in Zymoseptoria tritici (strain CBS 115943 / IPO323) (Speckled leaf blotch fungus).